Here is a 483-residue protein sequence, read N- to C-terminus: Regulatory protein ViaA (483 aa).

Belongs to the ViaA family. As to quaternary structure, homodimer. Interacts with RavA.

Its subcellular location is the cytoplasm. Component of the RavA-ViaA chaperone complex, which may act on the membrane to optimize the function of some of the respiratory chains. ViaA stimulates the ATPase activity of RavA. The sequence is that of Regulatory protein ViaA from Enterobacter sp. (strain 638).